Here is a 201-residue protein sequence, read N- to C-terminus: Recombination protein RecR (201 aa).

Residues 60 to 75 (CSVCGNVDSCDPCTIC) form a C4-type zinc finger. Positions 83–178 (STLIVVETVG…RTTRLAHGVP (96 aa)) constitute a Toprim domain.

This sequence belongs to the RecR family.

Functionally, may play a role in DNA repair. It seems to be involved in an RecBC-independent recombinational process of DNA repair. It may act with RecF and RecO. In Methylocella silvestris (strain DSM 15510 / CIP 108128 / LMG 27833 / NCIMB 13906 / BL2), this protein is Recombination protein RecR.